A 352-amino-acid polypeptide reads, in one-letter code: UDP-3-O-acylglucosamine N-acyltransferase (352 aa).

His244 serves as the catalytic Proton acceptor.

This sequence belongs to the transferase hexapeptide repeat family. LpxD subfamily. Homotrimer.

The catalysed reaction is a UDP-3-O-[(3R)-3-hydroxyacyl]-alpha-D-glucosamine + a (3R)-hydroxyacyl-[ACP] = a UDP-2-N,3-O-bis[(3R)-3-hydroxyacyl]-alpha-D-glucosamine + holo-[ACP] + H(+). It participates in bacterial outer membrane biogenesis; LPS lipid A biosynthesis. Catalyzes the N-acylation of UDP-3-O-acylglucosamine using 3-hydroxyacyl-ACP as the acyl donor. Is involved in the biosynthesis of lipid A, a phosphorylated glycolipid that anchors the lipopolysaccharide to the outer membrane of the cell. The chain is UDP-3-O-acylglucosamine N-acyltransferase from Anaeromyxobacter sp. (strain Fw109-5).